The primary structure comprises 286 residues: ATP synthase gamma chain (286 aa).

It belongs to the ATPase gamma chain family. F-type ATPases have 2 components, CF(1) - the catalytic core - and CF(0) - the membrane proton channel. CF(1) has five subunits: alpha(3), beta(3), gamma(1), delta(1), epsilon(1). CF(0) has three main subunits: a, b and c.

It is found in the cell inner membrane. Functionally, produces ATP from ADP in the presence of a proton gradient across the membrane. The gamma chain is believed to be important in regulating ATPase activity and the flow of protons through the CF(0) complex. The protein is ATP synthase gamma chain of Shewanella sp. (strain MR-4).